A 294-amino-acid chain; its full sequence is Homeobox protein Nkx-2.5 (294 aa).

2 disordered regions span residues 48 to 69 (GSEP…PAAF) and 102 to 122 (EQEK…RRKP). Pro residues predominate over residues 52–69 (PALPELPEPPPAKPPAAF). The span at 102 to 114 (EQEKRELEDPERP) shows a compositional bias: basic and acidic residues. The segment at residues 119-178 (RRKPRVLFSQAQVYELERRFKQQKYLSAPERDHLANVLKLTSTQVKIWFQNRRYKCKRQR) is a DNA-binding region (homeobox).

The protein belongs to the NK-2 homeobox family. As to quaternary structure, homodimer (via the homeobox); binds DNA as homodimer.

Its subcellular location is the nucleus. In terms of biological role, transcription factor required for the development of the heart and the spleen. Implicated in commitment to and/or differentiation of the myocardial lineage. Binds to the core DNA motif of promoter. The protein is Homeobox protein Nkx-2.5 (NKX-2.5) of Gallus gallus (Chicken).